A 1287-amino-acid polypeptide reads, in one-letter code: Rho GTPase-activating protein 33 (1287 aa).

The segment at 1–40 (MVARSTDSLDGPGEGSVQPLPTAGGPSVKGKPGKRLSAPR) is disordered. A Phosphoserine modification is found at S8. In terms of domain architecture, PX; atypical spans 59 to 168 (FGHIQLLLSP…CGPVLTWMEL (110 aa)). Residues 186–248 (PAVAAAHVIK…PSECVELFTE (63 aa)) form the SH3 domain. The Rho-GAP domain maps to 315–510 (CDLGEHLSNS…FLLTHVDVLF (196 aa)). Disordered stretches follow at residues 551–792 (RTQG…SPAA), 813–832 (AGGA…GRSL), 859–1030 (KLRG…VPTP), 1056–1075 (GPPS…SLGP), 1090–1134 (GASE…SPDF), and 1146–1287 (PPDH…RSYC). Positions 558-571 (TPTEPTTPKAPASP) are enriched in low complexity. Residue S570 is modified to Phosphoserine. Residues 572-584 (AERRKGERGEKQR) show a composition bias toward basic and acidic residues. The span at 622-645 (SGSRPDTVTLRSAKSEESLSSQAS) shows a compositional bias: polar residues. Phosphoserine is present on S636. Residues 672–709 (AGSCESLSSSSSSESSSSESSSSSSESSAAGLGALSGS) show a composition bias toward low complexity. Residue S727 is modified to Phosphoserine. Over residues 752–766 (PGDPAPPASPAPPAP) the composition is skewed to pro residues. Low complexity-rich tracts occupy residues 813–829 (AGGA…LSPG) and 896–919 (PARL…SQQE). Polar residues-rich tracts occupy residues 972–981 (RQQSDGSLLR) and 1019–1028 (SPCSVPSQVP). Position 1169 is a phosphotyrosine (Y1169). Low complexity predominate over residues 1175–1189 (GPRGPSPASSSSSSP). R1244 carries the post-translational modification Omega-N-methylarginine. Residues 1274 to 1287 (SWSLHSEGQTRSYC) show a composition bias toward polar residues.

Belongs to the PX domain-containing GAP family. As to quaternary structure, specifically interacts with CDC42 and RHOQ/TC10 through its Rho-GAP domain. Interacts with NEK6.

May be involved in several stages of intracellular trafficking. Could play an important role in the regulation of glucose transport by insulin. May act as a downstream effector of RHOQ/TC10 in the regulation of insulin-stimulated glucose transport. This chain is Rho GTPase-activating protein 33 (ARHGAP33), found in Homo sapiens (Human).